Reading from the N-terminus, the 118-residue chain is MARVKRGVTSHARHKKVLELAKGYRGRSSTNYRIALERVEKALRYAYRDRRNKKRDFRALWIQRINAAVREHGLTYSRFINGLDKAGIEIDRKVLAAIAFDDSAAFGEIVKKAQAALG.

This sequence belongs to the bacterial ribosomal protein bL20 family.

Functionally, binds directly to 23S ribosomal RNA and is necessary for the in vitro assembly process of the 50S ribosomal subunit. It is not involved in the protein synthesizing functions of that subunit. In Gluconobacter oxydans (strain 621H) (Gluconobacter suboxydans), this protein is Large ribosomal subunit protein bL20.